We begin with the raw amino-acid sequence, 62 residues long: Photosystem II reaction center protein Z (62 aa).

The next 2 helical transmembrane spans lie at 8–28 and 41–61; these read AVFA…VVFA and FSGT…NSLI.

The protein belongs to the PsbZ family. PSII is composed of 1 copy each of membrane proteins PsbA, PsbB, PsbC, PsbD, PsbE, PsbF, PsbH, PsbI, PsbJ, PsbK, PsbL, PsbM, PsbT, PsbY, PsbZ, Psb30/Ycf12, at least 3 peripheral proteins of the oxygen-evolving complex and a large number of cofactors. It forms dimeric complexes.

The protein resides in the plastid. Its subcellular location is the chloroplast thylakoid membrane. Its function is as follows. May control the interaction of photosystem II (PSII) cores with the light-harvesting antenna, regulates electron flow through the 2 photosystem reaction centers. PSII is a light-driven water plastoquinone oxidoreductase, using light energy to abstract electrons from H(2)O, generating a proton gradient subsequently used for ATP formation. This Pisum sativum (Garden pea) protein is Photosystem II reaction center protein Z.